Here is a 70-residue protein sequence, read N- to C-terminus: Conotoxin elongated-tx3a-a (70 aa).

A signal peptide spans M1–A24. Positions D25–R44 are excised as a propeptide. Disulfide bonds link C55–C68, C56–C66, and C61–C69. 6'-bromotryptophan; partial is present on W58. C69 is modified (cysteine amide; partial).

Belongs to the conotoxin M superfamily. Post-translationally, two short peptides are produced from this precursor; Conotoxin tx3a-b is amidated at Cys-69 (but has no bromotryptophan), whereas conotoxin tx3a-a has an unmodified Gly-70 and a bromotryptophan. Two elongated peptides are also produced; Conotoxin elongated-tx3a-b is amidated at Cys-69 (but has no bromotryptophan), whereas conotoxin elongated tx3a-a has an unmodified Gly-70 (but has no bromotryptophan). Ju et al. (2022) describe a disulfide connectivity (C55-C61; C56-C69; C66-C68) that differs from that of Han and colleagues (2006), McDougal et al. (2008), and Ueberheide et al. (2009). As to expression, expressed by the venom duct. Is present in all duct parts with a highest content in part 2 (proximal of the venom bulb) and then decreases in concentration toward the end of the duct.

The protein resides in the secreted. Its function is as follows. Intracranial injection into mice causes scratching and hyperactivity. In vitro, inhibits proliferation of the mice ovarian cancer cells ID8. The protein is Conotoxin elongated-tx3a-a of Conus textile (Cloth-of-gold cone).